The sequence spans 297 residues: uncharacterized protein (297 aa).

The segment covering 1-12 (MASYSFQFSTDA) has biased composition (polar residues). The disordered stretch occupies residues 1-21 (MASYSFQFSTDATGKPGAAKP).

To B.subtilis XkdY/XepA.

This is an uncharacterized protein from Bacillus subtilis (strain 168).